Reading from the N-terminus, the 264-residue chain is Small ribosomal subunit protein eS1 (264 aa).

Residues 236 to 255 show a composition bias toward basic and acidic residues; that stretch reads GEGGSGKRGEAGDKSERPEG. Positions 236-264 are disordered; it reads GEGGSGKRGEAGDKSERPEGYEPPVQESV.

Belongs to the eukaryotic ribosomal protein eS1 family. Component of the small ribosomal subunit. Mature ribosomes consist of a small (40S) and a large (60S) subunit. The 40S subunit contains about 33 different proteins and 1 molecule of RNA (18S). The 60S subunit contains about 49 different proteins and 3 molecules of RNA (28S, 5.8S and 5S).

Its subcellular location is the cytoplasm. The polypeptide is Small ribosomal subunit protein eS1 (Spodoptera frugiperda (Fall armyworm)).